The sequence spans 394 residues: Deoxyguanosinetriphosphate triphosphohydrolase-like protein (394 aa).

Positions 1–34 (MSSSPFFVPRAPYAEDPAKSRGRRFPEDESRTRT) are disordered. Residues 16 to 34 (DPAKSRGRRFPEDESRTRT) are compositionally biased toward basic and acidic residues. In terms of domain architecture, HD spans 70 to 210 (RLTHSLEVAQ…AALADDIAYN (141 aa)).

It belongs to the dGTPase family. Type 2 subfamily.

In Caulobacter sp. (strain K31), this protein is Deoxyguanosinetriphosphate triphosphohydrolase-like protein.